The sequence spans 65 residues: uncharacterized protein (65 aa).

This is an uncharacterized protein from Pasteurella multocida (strain Pm70).